Reading from the N-terminus, the 229-residue chain is Prolactin (229 aa).

A signal peptide spans Met-1–Ser-30. Cys-34 and Cys-41 are joined by a disulfide. Ser-56 carries the phosphoserine modification. Residue Asn-61 is glycosylated (N-linked (GlcNAc...) asparagine; partial). 2 positions are modified to phosphoserine: Ser-64 and Ser-120. Intrachain disulfides connect Cys-88–Cys-204 and Cys-221–Cys-229.

This sequence belongs to the somatotropin/prolactin family. In terms of assembly, interacts with PRLR.

Its subcellular location is the secreted. In terms of biological role, prolactin acts primarily on the mammary gland by promoting lactation, mammogenesis, mitogenesis and osmoregulation. This chain is Prolactin (PRL), found in Ovis aries (Sheep).